The primary structure comprises 310 residues: L-lactate dehydrogenase (310 aa).

Residues Val-11, Asp-32, and Arg-37 each contribute to the NAD(+) site. Residues Gln-79, Arg-85, and 117–120 each bind substrate; that span reads NPVD. NAD(+)-binding positions include 115-117 and Thr-140; that span reads VTN. 145–148 is a binding site for substrate; it reads DTAR. Beta-D-fructose 1,6-bisphosphate-binding residues include Arg-150 and His-165. Residue His-172 is the Proton acceptor of the active site. Tyr-221 carries the post-translational modification Phosphotyrosine. Residue Thr-230 participates in substrate binding.

This sequence belongs to the LDH/MDH superfamily. LDH family. Homotetramer.

The protein localises to the cytoplasm. It carries out the reaction (S)-lactate + NAD(+) = pyruvate + NADH + H(+). It participates in fermentation; pyruvate fermentation to lactate; (S)-lactate from pyruvate: step 1/1. Allosterically activated by fructose 1,6-bisphosphate (FBP). Its function is as follows. Catalyzes the conversion of lactate to pyruvate. The polypeptide is L-lactate dehydrogenase (Fervidobacterium nodosum (strain ATCC 35602 / DSM 5306 / Rt17-B1)).